A 266-amino-acid polypeptide reads, in one-letter code: 2-C-methyl-D-erythritol 4-phosphate cytidylyltransferase (266 aa).

Residues 229-266 (NRDCGPGTRDPESAHPQSSVSASAFSGPGSRAPGPEEI) form a disordered region. Polar residues predominate over residues 243–252 (HPQSSVSASA).

The protein belongs to the IspD/TarI cytidylyltransferase family. IspD subfamily.

It catalyses the reaction 2-C-methyl-D-erythritol 4-phosphate + CTP + H(+) = 4-CDP-2-C-methyl-D-erythritol + diphosphate. The protein operates within isoprenoid biosynthesis; isopentenyl diphosphate biosynthesis via DXP pathway; isopentenyl diphosphate from 1-deoxy-D-xylulose 5-phosphate: step 2/6. Functionally, catalyzes the formation of 4-diphosphocytidyl-2-C-methyl-D-erythritol from CTP and 2-C-methyl-D-erythritol 4-phosphate (MEP). This is 2-C-methyl-D-erythritol 4-phosphate cytidylyltransferase from Xanthomonas axonopodis pv. citri (strain 306).